Here is a 184-residue protein sequence, read N- to C-terminus: GTP cyclohydrolase 1 (184 aa).

3 residues coordinate Zn(2+): Cys-75, His-78, and Cys-146.

It belongs to the GTP cyclohydrolase I family. Homomer.

It catalyses the reaction GTP + H2O = 7,8-dihydroneopterin 3'-triphosphate + formate + H(+). The protein operates within cofactor biosynthesis; 7,8-dihydroneopterin triphosphate biosynthesis; 7,8-dihydroneopterin triphosphate from GTP: step 1/1. The sequence is that of GTP cyclohydrolase 1 from Streptococcus pneumoniae serotype 19F (strain G54).